We begin with the raw amino-acid sequence, 555 residues long: Potassium-transporting ATPase potassium-binding subunit (555 aa).

The next 10 membrane-spanning stretches (helical) occupy residues 2–22, 60–80, 130–150, 173–193, 246–266, 278–298, 374–394, 412–432, 483–503, and 525–545; these read IWVA…PTGI, QYAL…YFIF, IGIT…VMAF, VFLP…VPQT, MSNI…PFTY, ILFV…TTSE, AGFV…GLMV, LIAV…ALAL, LVMF…AASL, and GIFI…MLVL.

It belongs to the KdpA family. As to quaternary structure, the system is composed of three essential subunits: KdpA, KdpB and KdpC.

It is found in the cell membrane. Part of the high-affinity ATP-driven potassium transport (or Kdp) system, which catalyzes the hydrolysis of ATP coupled with the electrogenic transport of potassium into the cytoplasm. This subunit binds the extracellular potassium ions and delivers the ions to the membrane domain of KdpB through an intramembrane tunnel. In Bacillus mycoides (strain KBAB4) (Bacillus weihenstephanensis), this protein is Potassium-transporting ATPase potassium-binding subunit.